Reading from the N-terminus, the 719-residue chain is Catalase-3 (719 aa).

Residues 1 to 18 form the signal peptide; sequence MRVNALLPLSGLIGTALA. Positions 19–30 are excised as a propeptide; it reads ACPFADPSALGR. Catalysis depends on residues H102 and N175. Y389 is a heme binding site.

The protein belongs to the catalase family. Requires heme as cofactor.

The catalysed reaction is 2 H2O2 = O2 + 2 H2O. Its function is as follows. Occurs in almost all aerobically respiring organisms and serves to protect cells from the toxic effects of hydrogen peroxide. This is Catalase-3 (cat-3) from Neurospora crassa (strain ATCC 24698 / 74-OR23-1A / CBS 708.71 / DSM 1257 / FGSC 987).